The chain runs to 82 residues: Diphthamide biosynthesis protein 3 (82 aa).

Residues 3-59 form the DPH-type MB domain; that stretch reads TYDEIEIEDMTFEPENQMFTYPCPCGDRFQIYLDDMFEGEKVAVCPSCSLMIDVVFD. Fe cation contacts are provided by Cys-25, Cys-27, Cys-47, and Cys-50. Residues 66 to 82 are required for interaction with the elongator complex; that stretch reads YYEEAGIHPPEPIAAAA.

Belongs to the DPH3 family. Component of the 2-(3-amino-3-carboxypropyl)histidine synthase complex composed of DPH1, DPH2, KTI11/DPH3 and a NADH-dependent reductase, predominantly CBR1. Interacts with DPH1. Interacts with DPH2. Interacts with CBR1. Interacts with elongation factor 2. Interacts with ATS1/KTI13; the interaction is direct. Interacts with the 40S ribosomal protein RPS7A. Interacts with the 40S ribosomal protein RPS19A. Interacts with the elongator complex subunit IKI3/ELP1. Interacts with the elongator complex subunit ELP2. Interacts with the elongator complex subunit ELP3. Interacts with the elongator complex subunit ELP5.

Its subcellular location is the cytoplasm. The protein resides in the nucleus. It carries out the reaction [3Fe-4S](1+)-[protein] + Fe(2+)-[Dph3] = [3Fe-4S](0)-[protein] + Fe(3+)-[Dph3]. It catalyses the reaction 2 [3Fe-4S](0)-[protein] + 2 Fe(2+)-[Dph3] + NADH = 2 [4Fe-4S](1+)-[protein] + 2 [Dph3] + NAD(+) + H(+). The protein operates within protein modification; peptidyl-diphthamide biosynthesis. In terms of biological role, required for the first step of diphthamide biosynthesis, a post-translational modification of histidine which occurs in elongation factor 2. DPH1 and DPH2 transfer a 3-amino-3-carboxypropyl (ACP) group from S-adenosyl-L-methionine (SAM) to a histidine residue, the reaction is assisted by a reduction system comprising KTI11/DPH3 and a NADH-dependent reductase, predominantly CBR1. Acts as an electron donor to reduce the Fe-S cluster in DPH1-DPH2 keeping the [4Fe-4S] clusters in the active and reduced state. Restores iron to DPH1-DPH2 iron-sulfur clusters which have degraded from [4Fe-4S] to [3Fe-4S] by donating an iron atom to reform [4Fe-4S] clusters, in a manner dependent on the presence of elongation factor 2 and SAM. Together with ATS1; associates with the elongator complex and is required for tRNA Wobble base modifications mediated by the elongator complex. The elongator complex is required for multiple tRNA modifications, including mcm5U (5-methoxycarbonylmethyl uridine), mcm5s 2U (5-methoxycarbonylmethyl-2-thiouridine), and ncm5U (5-carbamoylmethyl uridine). The protein is Diphthamide biosynthesis protein 3 of Saccharomyces cerevisiae (strain ATCC 204508 / S288c) (Baker's yeast).